A 206-amino-acid chain; its full sequence is Small ribosomal subunit protein uS4c (206 aa).

The 59-residue stretch at 94–152 (MRLDNIVFRLGMAPTIPAARQLVNHRHILVNDFTVNIPSYSCKLGDKISVQKRFESKTN) folds into the S4 RNA-binding domain.

This sequence belongs to the universal ribosomal protein uS4 family. As to quaternary structure, part of the 30S ribosomal subunit. Contacts protein S5. The interaction surface between S4 and S5 is involved in control of translational fidelity.

The protein resides in the plastid. It localises to the chloroplast. One of the primary rRNA binding proteins, it binds directly to 16S rRNA where it nucleates assembly of the body of the 30S subunit. In terms of biological role, with S5 and S12 plays an important role in translational accuracy. This is Small ribosomal subunit protein uS4c (rps4) from Chara vulgaris (Common stonewort).